We begin with the raw amino-acid sequence, 183 residues long: Probable chorismate pyruvate-lyase 2 (183 aa).

Residues Arg-76, Leu-114, and Glu-166 each coordinate substrate.

Belongs to the UbiC family.

It localises to the cytoplasm. The catalysed reaction is chorismate = 4-hydroxybenzoate + pyruvate. It functions in the pathway cofactor biosynthesis; ubiquinone biosynthesis. In terms of biological role, removes the pyruvyl group from chorismate, with concomitant aromatization of the ring, to provide 4-hydroxybenzoate (4HB) for the ubiquinone pathway. In Pseudomonas fluorescens (strain Pf0-1), this protein is Probable chorismate pyruvate-lyase 2.